Here is a 148-residue protein sequence, read N- to C-terminus: UPF0178 protein DP1304 (148 aa).

It belongs to the UPF0178 family.

This chain is UPF0178 protein DP1304, found in Desulfotalea psychrophila (strain LSv54 / DSM 12343).